The primary structure comprises 428 residues: MMKRFTKQENSWVLYDWANSAYSIVVTTAVFPLFYKSAAAESGVSAAQSTAYLGYTIAISTFILAMLGPILGTIADYEGCKKKFFGFFVSAGVASTAMLAFIPSEHWLLLLLFYTVSAIGFSGANVFYDAFLVDVTPEKRMNLVSARGFGLGYIGSTIPFIISIAVILLAQAETIPVSVSAASQLSFFITAAWWGLFTIPMIKHVHQRYYIKKEPHIVINSFKRLGQTMKRIRQYRALFLFLLAYFFYIDGVGTIITMSTSYGSDLGIGSSSLLIILFVTQVVAAPFSIIYGKLAERFTGKTMLYVGIVIYMIVCVYAYFMETTLDFWILAMLVATSQGGIQALSRSYFAKLVPKRHANEFFGFYNIFGKFASIMGPLLIAVTAQLTGKSSTAVFSLIILFVIGIVILAFVPEETSTDVSQQQNDLPL.

A run of 12 helical transmembrane segments spans residues 14–34 (LYDW…FPLF), 55–75 (YTIA…GTIA), 84–104 (FFGF…FIPS), 107–127 (WLLL…ANVF), 149–169 (FGLG…VILL), 182–202 (ASQL…IPMI), 238–258 (LFLF…IITM), 272–292 (SLLI…IIYG), 302–322 (TMLY…YFME), 324–344 (TLDF…IQAL), 361–381 (FFGF…LLIA), and 392–412 (TAVF…AFVP).

It belongs to the major facilitator superfamily.

It localises to the cell membrane. This is an uncharacterized protein from Bacillus subtilis (strain 168).